The following is a 148-amino-acid chain: D-aminoacyl-tRNA deacylase (148 aa).

A Gly-cisPro motif, important for rejection of L-amino acids motif is present at residues 137-138 (GP).

The protein belongs to the DTD family. In terms of assembly, homodimer.

Its subcellular location is the cytoplasm. The enzyme catalyses glycyl-tRNA(Ala) + H2O = tRNA(Ala) + glycine + H(+). It carries out the reaction a D-aminoacyl-tRNA + H2O = a tRNA + a D-alpha-amino acid + H(+). Its function is as follows. An aminoacyl-tRNA editing enzyme that deacylates mischarged D-aminoacyl-tRNAs. Also deacylates mischarged glycyl-tRNA(Ala), protecting cells against glycine mischarging by AlaRS. Acts via tRNA-based rather than protein-based catalysis; rejects L-amino acids rather than detecting D-amino acids in the active site. By recycling D-aminoacyl-tRNA to D-amino acids and free tRNA molecules, this enzyme counteracts the toxicity associated with the formation of D-aminoacyl-tRNA entities in vivo and helps enforce protein L-homochirality. This is D-aminoacyl-tRNA deacylase from Lacticaseibacillus casei (strain BL23) (Lactobacillus casei).